Here is a 239-residue protein sequence, read N- to C-terminus: tRNA (guanine-N(7)-)-methyltransferase (239 aa).

Glutamate 69, glutamate 94, aspartate 121, and aspartate 144 together coordinate S-adenosyl-L-methionine. Aspartate 144 is a catalytic residue. Position 148 (lysine 148) interacts with substrate. Residues 150 to 155 (RHNKRR) form an interaction with RNA region. Substrate contacts are provided by residues aspartate 180 and 217–220 (TKFE).

This sequence belongs to the class I-like SAM-binding methyltransferase superfamily. TrmB family. Monomer.

It catalyses the reaction guanosine(46) in tRNA + S-adenosyl-L-methionine = N(7)-methylguanosine(46) in tRNA + S-adenosyl-L-homocysteine. It functions in the pathway tRNA modification; N(7)-methylguanine-tRNA biosynthesis. Catalyzes the formation of N(7)-methylguanine at position 46 (m7G46) in tRNA. This chain is tRNA (guanine-N(7)-)-methyltransferase, found in Pectobacterium atrosepticum (strain SCRI 1043 / ATCC BAA-672) (Erwinia carotovora subsp. atroseptica).